A 548-amino-acid polypeptide reads, in one-letter code: Putative ATP-dependent RNA helicase R290 (548 aa).

The 169-residue stretch at 38-206 folds into the Helicase ATP-binding domain; sequence INKVINGEDV…CKVLQLKTNE (169 aa). 51–58 is a binding site for ATP; sequence LMTSAGKS. Residues 150-153 carry the DEAH box motif; it reads DEAH. A Helicase C-terminal domain is found at 231–376; that stretch reads DIVPIINKYP…KTQLALLEQM (146 aa).

It belongs to the DEAD box helicase family. DEAH subfamily.

It carries out the reaction ATP + H2O = ADP + phosphate + H(+). This is Putative ATP-dependent RNA helicase R290 from Acanthamoeba polyphaga mimivirus (APMV).